A 134-amino-acid chain; its full sequence is UPF0412 protein YaaI (134 aa).

The first 23 residues, M1–A23, serve as a signal peptide directing secretion.

This sequence belongs to the UPF0412 family.

The chain is UPF0412 protein YaaI from Salmonella paratyphi A (strain ATCC 9150 / SARB42).